A 121-amino-acid polypeptide reads, in one-letter code: Large ribosomal subunit protein uL18 (121 aa).

Belongs to the universal ribosomal protein uL18 family. Part of the 50S ribosomal subunit; part of the 5S rRNA/L5/L18/L25 subcomplex. Contacts the 5S and 23S rRNAs.

This is one of the proteins that bind and probably mediate the attachment of the 5S RNA into the large ribosomal subunit, where it forms part of the central protuberance. In Leptothrix cholodnii (strain ATCC 51168 / LMG 8142 / SP-6) (Leptothrix discophora (strain SP-6)), this protein is Large ribosomal subunit protein uL18.